We begin with the raw amino-acid sequence, 1032 residues long: Contactin-1a (1032 aa).

The N-terminal stretch at 1–31 (MIPEAFQPRAMKHTTTVLMLALSSRFWSVCA) is a signal peptide. 6 consecutive Ig-like C2-type domains span residues 46 to 139 (PVFE…ARVQ), 144 to 231 (DMFS…KSVF), 249 to 335 (PADI…THLY), 340 to 417 (PDWL…AELR), 423 to 510 (PSFQ…GSLS), and 515 to 612 (TKIT…AELV). Cystine bridges form between cysteine 70–cysteine 122 and cysteine 166–cysteine 219. N-linked (GlcNAc...) asparagine glycosylation is found at asparagine 119, asparagine 216, and asparagine 266. Disulfide bonds link cysteine 271–cysteine 319, cysteine 361–cysteine 401, and cysteine 446–cysteine 494. N-linked (GlcNAc...) asparagine glycosylation is found at asparagine 455, asparagine 467, asparagine 483, and asparagine 504. Cysteine 536 and cysteine 596 are joined by a disulfide. Asparagine 604 carries an N-linked (GlcNAc...) asparagine glycan. Fibronectin type-III domains follow at residues 619 to 718 (PPGG…TREA), 723 to 820 (APSD…SAQD), 825 to 918 (APII…TKKS), and 920 to 1015 (PSRP…APAP). Residues 699–729 (NTLGTGPPSEPSPKTTTREARPIVAPSDIGG) form a disordered region. Asparagine 879 is a glycosylation site (N-linked (GlcNAc...) asparagine). The disordered stretch occupies residues 907–926 (ASQRNRIYTKKSPPSRPPKI). Asparagine 950 carries N-linked (GlcNAc...) asparagine glycosylation. Glycine 1010 carries GPI-anchor amidated glycine lipidation. Positions 1011 to 1032 (SAPAPALASALLLLPLLWTLML) are cleaved as a propeptide — removed in mature form.

It belongs to the immunoglobulin superfamily. Contactin family. Expressed in brain.

It localises to the cell membrane. Its function is as follows. Mediates cell surface interactions during nervous system development. The polypeptide is Contactin-1a (cntn1a) (Danio rerio (Zebrafish)).